Consider the following 110-residue polypeptide: Inner membrane protein YgiZ (110 aa).

Over 1-8 the chain is Cytoplasmic; it reads MLKQKIKT. Residues 9–29 form a helical membrane-spanning segment; it reads IFEALLYIMLTYWLIDSFFAF. The Periplasmic segment spans residues 30–53; sequence NKYDWMLESGGNICSIPSVSGEDR. A helical membrane pass occupies residues 54 to 74; it reads ILQAMIAAFFLLTPLIILILR. At 75–83 the chain is on the cytoplasmic side; the sequence is KLFMREMFE. Residues 84-104 form a helical membrane-spanning segment; that stretch reads FWVYVFSLGICLVCGWWLFWG. At 105-110 the chain is on the periplasmic side; that stretch reads RFIFCY.

Its subcellular location is the cell inner membrane. The polypeptide is Inner membrane protein YgiZ (ygiZ) (Escherichia coli (strain K12)).